Reading from the N-terminus, the 505-residue chain is Probable Xaa-Pro aminopeptidase Pc16g13390 (505 aa).

4 residues coordinate Mn(2+): D287, D298, E436, and E475.

This sequence belongs to the peptidase M24B family. It depends on Mn(2+) as a cofactor.

It carries out the reaction Release of any N-terminal amino acid, including proline, that is linked to proline, even from a dipeptide or tripeptide.. Its function is as follows. Catalyzes the removal of a penultimate prolyl residue from the N-termini of peptides. In Penicillium rubens (strain ATCC 28089 / DSM 1075 / NRRL 1951 / Wisconsin 54-1255) (Penicillium chrysogenum), this protein is Probable Xaa-Pro aminopeptidase Pc16g13390.